A 257-amino-acid chain; its full sequence is MSYFQLEDMLRAGVHFGHLARRWSPKMKPYIFMEKNGVHIIDLQKTLVLADNALNALDAIAQTGREIMFVGTKKQAKNIIAAEAERAGMPYVCERWLGGMLTNFSTIRQSIRRMNAIDRMETDGTYDMITKKERLMLGREREKLMRILGGIATMTRIPAALFIVDIKKEHIAIKEARSLGIPIFAMVDTNCDPDLVDYVIPANDDAIRSIQLMVKAVADTIVNARALKVEQEVLAKMDEADGSEAEPEDPAAPESAE.

The segment at methionine 237 to glutamate 257 is disordered. A compositionally biased stretch (acidic residues) spans alanine 240–glutamate 257.

The protein belongs to the universal ribosomal protein uS2 family.

The protein is Small ribosomal subunit protein uS2 of Chlorobium phaeovibrioides (strain DSM 265 / 1930) (Prosthecochloris vibrioformis (strain DSM 265)).